The sequence spans 620 residues: Probable indole-3-acetic acid-amido synthetase GH3.7 (620 aa).

This sequence belongs to the IAA-amido conjugating enzyme family. In terms of tissue distribution, ubiquitous.

May catalyze the synthesis of indole-3-acetic acid (IAA)-amino acid conjugates, providing a mechanism for the plant to cope with the presence of excess auxin. In Oryza sativa subsp. japonica (Rice), this protein is Probable indole-3-acetic acid-amido synthetase GH3.7 (GH3.7).